The sequence spans 523 residues: Light-independent protochlorophyllide reductase subunit B (523 aa).

Residue Asp36 participates in [4Fe-4S] cluster binding. Asp290 functions as the Proton donor in the catalytic mechanism. Gly425–Leu426 contributes to the substrate binding site.

This sequence belongs to the ChlB/BchB/BchZ family. Protochlorophyllide reductase is composed of three subunits; ChlL, ChlN and ChlB. Forms a heterotetramer of two ChlB and two ChlN subunits. Requires [4Fe-4S] cluster as cofactor.

It carries out the reaction chlorophyllide a + oxidized 2[4Fe-4S]-[ferredoxin] + 2 ADP + 2 phosphate = protochlorophyllide a + reduced 2[4Fe-4S]-[ferredoxin] + 2 ATP + 2 H2O. Its pathway is porphyrin-containing compound metabolism; chlorophyll biosynthesis (light-independent). Its function is as follows. Component of the dark-operative protochlorophyllide reductase (DPOR) that uses Mg-ATP and reduced ferredoxin to reduce ring D of protochlorophyllide (Pchlide) to form chlorophyllide a (Chlide). This reaction is light-independent. The NB-protein (ChlN-ChlB) is the catalytic component of the complex. In Prochlorococcus marinus (strain MIT 9301), this protein is Light-independent protochlorophyllide reductase subunit B.